The sequence spans 395 residues: Phosphoglycerate kinase (395 aa).

Substrate-binding positions include 21–23 (DLN), arginine 36, 59–62 (HLGR), arginine 113, and arginine 146. Residues lysine 197, glutamate 324, and 350 to 353 (GGDT) contribute to the ATP site.

Belongs to the phosphoglycerate kinase family. In terms of assembly, monomer.

Its subcellular location is the cytoplasm. The enzyme catalyses (2R)-3-phosphoglycerate + ATP = (2R)-3-phospho-glyceroyl phosphate + ADP. Its pathway is carbohydrate degradation; glycolysis; pyruvate from D-glyceraldehyde 3-phosphate: step 2/5. This is Phosphoglycerate kinase from Acinetobacter baumannii (strain ATCC 17978 / DSM 105126 / CIP 53.77 / LMG 1025 / NCDC KC755 / 5377).